A 163-amino-acid chain; its full sequence is MPTPKKGARLGGSASHQKKILSNLAASLFEHGAIKTTDAKAKALRPYAEKLITKAKSGSVADRRNVLALVPNKEIVAYLFNELAPKFENRPGGYTRIIKLENRKGDNAPMSQISLVLEETVSAEASRATRASASKKAAEEAETEEVVEAPAEETATEEAAEEK.

A compositionally biased stretch (low complexity) spans 123-135 (AEASRATRASASK). Residues 123 to 163 (AEASRATRASASKKAAEEAETEEVVEAPAEETATEEAAEEK) form a disordered region. Residues 140-163 (EAETEEVVEAPAEETATEEAAEEK) show a composition bias toward acidic residues.

Belongs to the bacterial ribosomal protein bL17 family. Part of the 50S ribosomal subunit. Contacts protein L32.

The protein is Large ribosomal subunit protein bL17 of Corynebacterium glutamicum (strain ATCC 13032 / DSM 20300 / JCM 1318 / BCRC 11384 / CCUG 27702 / LMG 3730 / NBRC 12168 / NCIMB 10025 / NRRL B-2784 / 534).